Here is a 340-residue protein sequence, read N- to C-terminus: UDP-3-O-acylglucosamine N-acyltransferase (340 aa).

Residue H238 is the Proton acceptor of the active site.

Belongs to the transferase hexapeptide repeat family. LpxD subfamily. As to quaternary structure, homotrimer.

It catalyses the reaction a UDP-3-O-[(3R)-3-hydroxyacyl]-alpha-D-glucosamine + a (3R)-hydroxyacyl-[ACP] = a UDP-2-N,3-O-bis[(3R)-3-hydroxyacyl]-alpha-D-glucosamine + holo-[ACP] + H(+). The protein operates within bacterial outer membrane biogenesis; LPS lipid A biosynthesis. Functionally, catalyzes the N-acylation of UDP-3-O-acylglucosamine using 3-hydroxyacyl-ACP as the acyl donor. Is involved in the biosynthesis of lipid A, a phosphorylated glycolipid that anchors the lipopolysaccharide to the outer membrane of the cell. This Shewanella frigidimarina (strain NCIMB 400) protein is UDP-3-O-acylglucosamine N-acyltransferase.